The chain runs to 513 residues: MQLNPSEISELLKSRIEGLGASTDVRTQGTVVSVTDGITRIHGLSDVMQGEMLEFPNNVFGVALNLERDSVGAVVLGDYTGVSEGDQVKTTGRILEVPVGPELKGRVVNTLGDAIDGKGPINTTQTDIIEKVAPGVIARRSVSQPLQTGIKAIDSMVPIGRGQRELIIGDRQTGKTAVAVDTIISQKGKGVTCVYVAIGQKASTINNVVRKLEEHGAMEYTIVVAAAASDSAAMQYMAAYAGCTMGEYFRDRGEDALIVYDDLTKQAWAYRQVSLLLRRPPGREAYPGDVFYLHSRLLERAARVNEEYVEKFTNGAVKGKTGSLTALPIIETQAGDVSAFVPTNVISITDGQIFLETDLFNAGVRPAINAGISVSRVGGAAQTKVIKKLSGGIRTDLAQYRELAAFAQFASDLDDATRRQLERGKRVVELLKQPQYQPLQVWELAVSLYAVNNGYLDDVDVAQILAFEKSLKDHLKAKHAALIQRIEDTKELSKDDEAELAAAVQDFKKHGAF.

169-176 (GDRQTGKT) is a binding site for ATP.

The protein belongs to the ATPase alpha/beta chains family. In terms of assembly, F-type ATPases have 2 components, CF(1) - the catalytic core - and CF(0) - the membrane proton channel. CF(1) has five subunits: alpha(3), beta(3), gamma(1), delta(1), epsilon(1). CF(0) has three main subunits: a(1), b(2) and c(9-12). The alpha and beta chains form an alternating ring which encloses part of the gamma chain. CF(1) is attached to CF(0) by a central stalk formed by the gamma and epsilon chains, while a peripheral stalk is formed by the delta and b chains.

The protein resides in the cell inner membrane. It carries out the reaction ATP + H2O + 4 H(+)(in) = ADP + phosphate + 5 H(+)(out). Its function is as follows. Produces ATP from ADP in the presence of a proton gradient across the membrane. The alpha chain is a regulatory subunit. The chain is ATP synthase subunit alpha from Bordetella pertussis (strain Tohama I / ATCC BAA-589 / NCTC 13251).